Consider the following 615-residue polypeptide: DNA mismatch repair protein MutL (615 aa).

The tract at residues 362–397 is disordered; that stretch reads HFAEPAVREPVAPRYSPAPASGSRPAASWPNAQPGY. Over residues 373–391 the composition is skewed to low complexity; that stretch reads APRYSPAPASGSRPAASWP.

This sequence belongs to the DNA mismatch repair MutL/HexB family.

This protein is involved in the repair of mismatches in DNA. It is required for dam-dependent methyl-directed DNA mismatch repair. May act as a 'molecular matchmaker', a protein that promotes the formation of a stable complex between two or more DNA-binding proteins in an ATP-dependent manner without itself being part of a final effector complex. The chain is DNA mismatch repair protein MutL from Escherichia coli O6:H1 (strain CFT073 / ATCC 700928 / UPEC).